Reading from the N-terminus, the 183-residue chain is Ribulose bisphosphate carboxylase small subunit, chloroplastic 1 (183 aa).

Residues 1 to 58 constitute a chloroplast transit peptide; the sequence is MASSMLSNAAMATTAATAGAQASMVAPFNGLKSFATFPITKKSSNDFSSLPSNGGRVQ.

The protein belongs to the RuBisCO small chain family. As to quaternary structure, heterohexadecamer of 8 large and 8 small subunits.

It is found in the plastid. It localises to the chloroplast. Functionally, ruBisCO catalyzes two reactions: the carboxylation of D-ribulose 1,5-bisphosphate, the primary event in carbon dioxide fixation, as well as the oxidative fragmentation of the pentose substrate. Both reactions occur simultaneously and in competition at the same active site. Although the small subunit is not catalytic it is essential for maximal activity. This chain is Ribulose bisphosphate carboxylase small subunit, chloroplastic 1, found in Amaranthus hypochondriacus (Prince-of-Wales feather).